Consider the following 88-residue polypeptide: Mitochondrial import inner membrane translocase subunit Tim10 (88 aa).

The Twin CX3C motif motif lies at 29 to 54 (CHRKCVPPHYKEAELSKGEAVCLDRC). Disulfide bonds link Cys-29-Cys-54 and Cys-33-Cys-50.

Belongs to the small Tim family. In terms of assembly, heterohexamer; composed of 3 copies of TIMM9 and 3 copies of TIMM10/TIM10A, named soluble 70 kDa complex. The complex forms a 6-bladed alpha-propeller structure and associates with the TIMM22 component of the TIM22 complex. Interacts with multi-pass transmembrane proteins in transit.

The protein resides in the mitochondrion inner membrane. Its function is as follows. Mitochondrial intermembrane chaperone that participates in the import and insertion of multi-pass transmembrane proteins into the mitochondrial inner membrane. May also be required for the transfer of beta-barrel precursors from the TOM complex to the sorting and assembly machinery (SAM complex) of the outer membrane. Acts as a chaperone-like protein that protects the hydrophobic precursors from aggregation and guide them through the mitochondrial intermembrane space. The polypeptide is Mitochondrial import inner membrane translocase subunit Tim10 (timm10) (Danio rerio (Zebrafish)).